Consider the following 346-residue polypeptide: S-adenosylmethionine:tRNA ribosyltransferase-isomerase (346 aa).

It belongs to the QueA family. Monomer.

Its subcellular location is the cytoplasm. The enzyme catalyses 7-aminomethyl-7-carbaguanosine(34) in tRNA + S-adenosyl-L-methionine = epoxyqueuosine(34) in tRNA + adenine + L-methionine + 2 H(+). The protein operates within tRNA modification; tRNA-queuosine biosynthesis. In terms of biological role, transfers and isomerizes the ribose moiety from AdoMet to the 7-aminomethyl group of 7-deazaguanine (preQ1-tRNA) to give epoxyqueuosine (oQ-tRNA). The sequence is that of S-adenosylmethionine:tRNA ribosyltransferase-isomerase from Cereibacter sphaeroides (strain KD131 / KCTC 12085) (Rhodobacter sphaeroides).